Here is a 168-residue protein sequence, read N- to C-terminus: Crossover junction endodeoxyribonuclease RuvC (168 aa).

Residues Asp-9, Glu-70, and Asp-145 contribute to the active site. Mg(2+) contacts are provided by Asp-9, Glu-70, and Asp-145.

It belongs to the RuvC family. In terms of assembly, homodimer which binds Holliday junction (HJ) DNA. The HJ becomes 2-fold symmetrical on binding to RuvC with unstacked arms; it has a different conformation from HJ DNA in complex with RuvA. In the full resolvosome a probable DNA-RuvA(4)-RuvB(12)-RuvC(2) complex forms which resolves the HJ. Mg(2+) serves as cofactor.

The protein localises to the cytoplasm. It catalyses the reaction Endonucleolytic cleavage at a junction such as a reciprocal single-stranded crossover between two homologous DNA duplexes (Holliday junction).. Functionally, the RuvA-RuvB-RuvC complex processes Holliday junction (HJ) DNA during genetic recombination and DNA repair. Endonuclease that resolves HJ intermediates. Cleaves cruciform DNA by making single-stranded nicks across the HJ at symmetrical positions within the homologous arms, yielding a 5'-phosphate and a 3'-hydroxyl group; requires a central core of homology in the junction. The consensus cleavage sequence is 5'-(A/T)TT(C/G)-3'. Cleavage occurs on the 3'-side of the TT dinucleotide at the point of strand exchange. HJ branch migration catalyzed by RuvA-RuvB allows RuvC to scan DNA until it finds its consensus sequence, where it cleaves and resolves the cruciform DNA. This chain is Crossover junction endodeoxyribonuclease RuvC, found in Chlamydia caviae (strain ATCC VR-813 / DSM 19441 / 03DC25 / GPIC) (Chlamydophila caviae).